A 68-amino-acid chain; its full sequence is Protein SlyX homolog (68 aa).

It belongs to the SlyX family.

The protein is Protein SlyX homolog of Pseudomonas putida (strain ATCC 700007 / DSM 6899 / JCM 31910 / BCRC 17059 / LMG 24140 / F1).